The primary structure comprises 181 residues: Small ribosomal subunit protein uS4 (181 aa).

Positions 108–172 (RRLQTQVYRR…SPLVSDIHSE (65 aa)) constitute an S4 RNA-binding domain.

This sequence belongs to the universal ribosomal protein uS4 family. In terms of assembly, part of the 30S ribosomal subunit. Contacts protein S5. The interaction surface between S4 and S5 is involved in control of translational fidelity.

Its function is as follows. One of the primary rRNA binding proteins, it binds directly to 16S rRNA where it nucleates assembly of the body of the 30S subunit. In terms of biological role, with S5 and S12 plays an important role in translational accuracy. The protein is Small ribosomal subunit protein uS4 of Methanospirillum hungatei JF-1 (strain ATCC 27890 / DSM 864 / NBRC 100397 / JF-1).